A 466-amino-acid chain; its full sequence is Amino acid permease 4 (466 aa).

The Cytoplasmic portion of the chain corresponds to 1 to 22 (MDVPRPAFKCFDDDGRLKRSGT). 2 helical membrane-spanning segments follow: residues 23 to 43 (VWTASAHIITAVIGSGVLSLA) and 44 to 64 (WAIGQLGWIAGPTVMLLFSFV). The Cytoplasmic portion of the chain corresponds to 65–111 (TYYSSTLLSDCYRTGDPVSGKRNYTYMDAVRSILGGFRFKICGLIQY). Residues 112–132 (LNLFGITVGYTIAASISMMAI) form a helical membrane-spanning segment. Over 133–177 (KRSNCFHESGGKNPCHMSSNPYMIMFGVTEILLSQIKDFDQIWWL) the chain is Extracellular. A helical membrane pass occupies residues 178 to 198 (SIVAAIMSFTYSAIGLALGII). Topologically, residues 199 to 226 (QVAANGVVKGSLTGISIGAVTQTQKIWR) are cytoplasmic. A helical transmembrane segment spans residues 227 to 247 (TFQALGDIAFAYSYSVVLIEI). Over 248–266 (QDTVRSPPAESKTMKIATR) the chain is Extracellular. The helical transmembrane segment at 267 to 287 (ISIAVTTTFYMLCGCMGYAAF) threads the bilayer. The Cytoplasmic segment spans residues 288–290 (GDK). A helical transmembrane segment spans residues 291–311 (APGNLLTGFGFYNPFWLLDVA). Topologically, residues 312–313 (NA) are extracellular. The chain crosses the membrane as a helical span at residues 314 to 334 (AIVIHLVGAYQVFAQPIFAFI). At 335 to 369 (EKQAAARFPDSDLVTKEYEIRIPGFRSPYKVNVFR) the chain is on the cytoplasmic side. The helical transmembrane segment at 370–390 (AVYRSGFVVLTTVISMLMPFF) threads the bilayer. Residues 391 to 392 (ND) are Extracellular-facing. Residues 393 to 413 (VVGILGALGFWPLTVYFPVEM) traverse the membrane as a helical segment. At 414-435 (YIRQRKVERWSMKWVCLQMLSC) the chain is on the cytoplasmic side. The chain crosses the membrane as a helical span at residues 436 to 456 (GCLMITLVAGVGSIAGVMLDL). At 457–466 (KVYKPFKTTY) the chain is on the extracellular side.

This sequence belongs to the amino acid/polyamine transporter 2 family. Amino acid/auxin permease (AAAP) (TC 2.A.18.2) subfamily. In terms of tissue distribution, expressed in leaves, stems and flowers.

It localises to the cell membrane. Its activity is regulated as follows. Inhibited by 2,4-dinitrophenol. Functionally, amino acid-proton symporter. Stereospecific transporter with a broad specificity for neutral amino acids, favoring small amino acids such as alanine, asparagine and glutamine. Also accepts large aromatic residues such as in phenlalanine or tyrosine. The polypeptide is Amino acid permease 4 (AAP4) (Arabidopsis thaliana (Mouse-ear cress)).